The primary structure comprises 61 residues: Small ribosomal subunit protein uS14 (61 aa).

C24, C27, C40, and C43 together coordinate Zn(2+).

Belongs to the universal ribosomal protein uS14 family. Zinc-binding uS14 subfamily. Part of the 30S ribosomal subunit. Contacts proteins S3 and S10. The cofactor is Zn(2+).

In terms of biological role, binds 16S rRNA, required for the assembly of 30S particles and may also be responsible for determining the conformation of the 16S rRNA at the A site. This is Small ribosomal subunit protein uS14 from Thermobifida fusca (strain YX).